Reading from the N-terminus, the 167-residue chain is CGG triplet repeat-binding protein 1 (167 aa).

Phosphoserine is present on Ser56. The Nuclear localization signal motif lies at 80-84 (RKKQR). At Ser164 the chain carries Phosphoserine.

In terms of tissue distribution, ubiquitous. Highly expressed in placenta, thymus, lymph nodes, cerebellum and cerebral cortex. Low expression in other regions of the brain.

Its subcellular location is the nucleus. Functionally, binds to nonmethylated 5'-d(CGG)(n)-3' trinucleotide repeats in the FMR1 promoter. May play a role in regulating FMR1 promoter. In Homo sapiens (Human), this protein is CGG triplet repeat-binding protein 1 (CGGBP1).